The primary structure comprises 351 residues: UDP-N-acetylglucosamine--N-acetylmuramyl-(pentapeptide) pyrophosphoryl-undecaprenol N-acetylglucosamine transferase (351 aa).

Residues 13–15 (TGG), N125, R161, S189, I241, 260–265 (ALTVCE), and Q285 contribute to the UDP-N-acetyl-alpha-D-glucosamine site.

It belongs to the glycosyltransferase 28 family. MurG subfamily.

Its subcellular location is the cell inner membrane. The enzyme catalyses di-trans,octa-cis-undecaprenyl diphospho-N-acetyl-alpha-D-muramoyl-L-alanyl-D-glutamyl-meso-2,6-diaminopimeloyl-D-alanyl-D-alanine + UDP-N-acetyl-alpha-D-glucosamine = di-trans,octa-cis-undecaprenyl diphospho-[N-acetyl-alpha-D-glucosaminyl-(1-&gt;4)]-N-acetyl-alpha-D-muramoyl-L-alanyl-D-glutamyl-meso-2,6-diaminopimeloyl-D-alanyl-D-alanine + UDP + H(+). Its pathway is cell wall biogenesis; peptidoglycan biosynthesis. Functionally, cell wall formation. Catalyzes the transfer of a GlcNAc subunit on undecaprenyl-pyrophosphoryl-MurNAc-pentapeptide (lipid intermediate I) to form undecaprenyl-pyrophosphoryl-MurNAc-(pentapeptide)GlcNAc (lipid intermediate II). The polypeptide is UDP-N-acetylglucosamine--N-acetylmuramyl-(pentapeptide) pyrophosphoryl-undecaprenol N-acetylglucosamine transferase (Haemophilus influenzae (strain ATCC 51907 / DSM 11121 / KW20 / Rd)).